A 316-amino-acid chain; its full sequence is MLKSNKVVLIGAGGVGSSFAYALTIDNSLVHELVIIDVNENKAKGEVMDLNHGQMFLKKNINVLFGTYKDCINADIVVITAGLNQKPSETRLDLVDKNSEIFKDIITNVVSSGFDGIFVIASNPVDIMTYVTMKYSKFPIHKVIGTGTILDTSRLRYFLSDRLNVNTQNIHSYIMGEHGDSSFATWDETKIAMKPLSEYLAEGKITEIELDEIHKKVVNAAYEVIKLKGATYYAIGLGIKNIVNAIIGDQNIILPISSYINGQYGGLVKDIYIGAPAIVCKEGVKEVLNFKISPKELEKFNSSANQLKSYIDKIEF.

Residues valine 15, aspartate 37, lysine 42, tyrosine 68, and glycine 82–leucine 83 contribute to the NAD(+) site. Substrate contacts are provided by residues glutamine 85, arginine 91, and asparagine 123–aspartate 126. NAD(+) is bound by residues alanine 121–asparagine 123 and threonine 146. Position 151 to 154 (aspartate 151 to arginine 154) interacts with substrate. Residues arginine 156 and histidine 171 each coordinate beta-D-fructose 1,6-bisphosphate. Histidine 178 acts as the Proton acceptor in catalysis. Residue tyrosine 222 is modified to Phosphotyrosine. Threonine 231 is a binding site for substrate.

Belongs to the LDH/MDH superfamily. LDH family. In terms of assembly, homotetramer.

It is found in the cytoplasm. The catalysed reaction is (S)-lactate + NAD(+) = pyruvate + NADH + H(+). Its pathway is fermentation; pyruvate fermentation to lactate; (S)-lactate from pyruvate: step 1/1. Its activity is regulated as follows. Allosterically activated by fructose 1,6-bisphosphate (FBP). In terms of biological role, catalyzes the conversion of lactate to pyruvate. This is L-lactate dehydrogenase from Borrelia garinii subsp. bavariensis (strain ATCC BAA-2496 / DSM 23469 / PBi) (Borreliella bavariensis).